The chain runs to 249 residues: FMN reductase (NADPH) (249 aa).

This sequence belongs to the flavin oxidoreductase frp family. Homodimer.

It catalyses the reaction FMNH2 + NADP(+) = FMN + NADPH + 2 H(+). Reduces FMNH(2) to FMN, with NADPH as reductant. It also reduces nitroaromatic compounds, quinones and azo dyes. This is FMN reductase (NADPH) (nfrA1) from Bacillus subtilis (strain 168).